The chain runs to 43 residues: uncharacterized protein (43 aa).

An N-terminal signal peptide occupies residues 1-16 (MKLLNFILIIFNALKS). N37 is a glycosylation site (N-linked (GlcNAc...) asparagine; by host).

This is an uncharacterized protein from Acheta domesticus (House cricket).